Here is a 121-residue protein sequence, read N- to C-terminus: Holo-[acyl-carrier-protein] synthase (121 aa).

Positions 6 and 55 each coordinate Mg(2+).

The protein belongs to the P-Pant transferase superfamily. AcpS family. It depends on Mg(2+) as a cofactor.

Its subcellular location is the cytoplasm. It carries out the reaction apo-[ACP] + CoA = holo-[ACP] + adenosine 3',5'-bisphosphate + H(+). In terms of biological role, transfers the 4'-phosphopantetheine moiety from coenzyme A to a Ser of acyl-carrier-protein. The chain is Holo-[acyl-carrier-protein] synthase from Chloroherpeton thalassium (strain ATCC 35110 / GB-78).